Reading from the N-terminus, the 131-residue chain is Small ribosomal subunit protein bS6 (131 aa).

Residues 96–131 (ITEASPMAKAKDERDSRRGPAGDRSYDEANAEEIAE) form a disordered region. Basic and acidic residues predominate over residues 104-122 (KAKDERDSRRGPAGDRSYD).

Belongs to the bacterial ribosomal protein bS6 family.

Its function is as follows. Binds together with bS18 to 16S ribosomal RNA. In Shewanella oneidensis (strain ATCC 700550 / JCM 31522 / CIP 106686 / LMG 19005 / NCIMB 14063 / MR-1), this protein is Small ribosomal subunit protein bS6.